The chain runs to 152 residues: Ribonuclease HI (152 aa).

Residues 1 to 142 (MDSKVVIYTD…ADKLAVQGRE (142 aa)) enclose the RNase H type-1 domain. Residues Asp-10, Glu-48, Asp-70, and Asp-134 each contribute to the Mg(2+) site.

The protein belongs to the RNase H family. Monomer. It depends on Mg(2+) as a cofactor.

It localises to the cytoplasm. The enzyme catalyses Endonucleolytic cleavage to 5'-phosphomonoester.. Endonuclease that specifically degrades the RNA of RNA-DNA hybrids. This Rickettsia prowazekii (strain Madrid E) protein is Ribonuclease HI (rnhA).